The chain runs to 782 residues: MRQKTLDVLEFEKIKSLVANETISDLGLEKVNQMMPATNFETVVFQMEETDEIAQIYNKHRLPSLSGLSKVSAFIHRADIGGVLNVSELNLIKRLIQVQNQFKTFYNQLVEEDEGVKYPILDDKMNQLPVLTDLFQQINETCDTYDLYDNASYELQGIRSKISSTNQRIRQNLDRIVKSQANQKKLSDAIVTVRNERNVIPVKAEYRQDFNGIVHDQSASGQTLYIEPSSVVEMNNQISRLRHDEAIEKERILTQLTGYVAADKDALLVAEHVMGQLDFLIAKARYSRSIKGTKPIFKEERTVYLPKAYHPLLNRETVVANTIEFMEDIETVIITGPNTGGKTVTLKTLGLIIIMAQSGLLIPTLDGSQLSVFKNVYCDIGDEQSIEQSLSTFSSHMTNIVEILKHADKHSLVLFDELGAGTDPSEGAALAMSILDHVRKIGSLVMATTHYPELKAYSCNREGVMNASVEFDVDTLSPTYKLLMGVPGRSNAFDISKKLGLSLNIINKAKTMIGTDEKEINEMIESLERNYKRVETQRLELDRLVKEAEQVHDDLSKQYQQFQNYEKSLIEEAKEKANQKIKAATKEADDIIKDLRQLREQKGADVKEHELIDKKKRLDDHYEAKSIKQNVQKQKYDKIVAGDEVKVLSYGQKGEVLEIVNDEEAIVQMGIIKMKLPIEDLEKKQKEKVKPTKMVTRQNRQTIKTELDLRGYRYEDALIELDQYLDQAVLSNYEQVYIIHGKGTGALQKGVQQHLKKHKSVSDFRGGMPSEGGFGVTVATLK.

Residue 336 to 343 (GPNTGGKT) participates in ATP binding. The region spanning 707–782 (LDLRGYRYED…GFGVTVATLK (76 aa)) is the Smr domain.

It belongs to the DNA mismatch repair MutS family. MutS2 subfamily. In terms of assembly, homodimer. Binds to stalled ribosomes, contacting rRNA.

Endonuclease that is involved in the suppression of homologous recombination and thus may have a key role in the control of bacterial genetic diversity. Its function is as follows. Acts as a ribosome collision sensor, splitting the ribosome into its 2 subunits. Detects stalled/collided 70S ribosomes which it binds and splits by an ATP-hydrolysis driven conformational change. Acts upstream of the ribosome quality control system (RQC), a ribosome-associated complex that mediates the extraction of incompletely synthesized nascent chains from stalled ribosomes and their subsequent degradation. Probably generates substrates for RQC. This Staphylococcus aureus (strain bovine RF122 / ET3-1) protein is Endonuclease MutS2.